The sequence spans 256 residues: Deoxyribose-phosphate aldolase (256 aa).

Residue aspartate 102 is the Proton donor/acceptor of the active site. The active-site Schiff-base intermediate with acetaldehyde is lysine 165. Lysine 197 serves as the catalytic Proton donor/acceptor.

It belongs to the DeoC/FbaB aldolase family. DeoC type 2 subfamily.

It localises to the cytoplasm. The enzyme catalyses 2-deoxy-D-ribose 5-phosphate = D-glyceraldehyde 3-phosphate + acetaldehyde. It functions in the pathway carbohydrate degradation; 2-deoxy-D-ribose 1-phosphate degradation; D-glyceraldehyde 3-phosphate and acetaldehyde from 2-deoxy-alpha-D-ribose 1-phosphate: step 2/2. In terms of biological role, catalyzes a reversible aldol reaction between acetaldehyde and D-glyceraldehyde 3-phosphate to generate 2-deoxy-D-ribose 5-phosphate. This chain is Deoxyribose-phosphate aldolase, found in Shewanella sp. (strain MR-7).